We begin with the raw amino-acid sequence, 449 residues long: Glucose-6-phosphate isomerase (449 aa).

The active-site Proton donor is Glu-291. Residues His-312 and Lys-426 contribute to the active site.

Belongs to the GPI family.

Its subcellular location is the cytoplasm. It catalyses the reaction alpha-D-glucose 6-phosphate = beta-D-fructose 6-phosphate. It functions in the pathway carbohydrate biosynthesis; gluconeogenesis. Its pathway is carbohydrate degradation; glycolysis; D-glyceraldehyde 3-phosphate and glycerone phosphate from D-glucose: step 2/4. Functionally, catalyzes the reversible isomerization of glucose-6-phosphate to fructose-6-phosphate. The protein is Glucose-6-phosphate isomerase of Streptococcus pyogenes serotype M6 (strain ATCC BAA-946 / MGAS10394).